We begin with the raw amino-acid sequence, 189 residues long: UPF0232 protein MLBr00004 (189 aa).

The tract at residues 59–78 (TDRRRNWSGPGPDVRDPQPL) is disordered.

This sequence belongs to the UPF0232 family.

This Mycobacterium leprae (strain Br4923) protein is UPF0232 protein MLBr00004.